The sequence spans 367 residues: tRNA/tmRNA (uracil-C(5))-methyltransferase (367 aa).

S-adenosyl-L-methionine-binding residues include glutamine 190, tyrosine 218, asparagine 223, glutamate 239, and aspartate 299. Cysteine 324 acts as the Nucleophile in catalysis. Glutamate 358 serves as the catalytic Proton acceptor.

This sequence belongs to the class I-like SAM-binding methyltransferase superfamily. RNA M5U methyltransferase family. TrmA subfamily.

It catalyses the reaction uridine(54) in tRNA + S-adenosyl-L-methionine = 5-methyluridine(54) in tRNA + S-adenosyl-L-homocysteine + H(+). The catalysed reaction is uridine(341) in tmRNA + S-adenosyl-L-methionine = 5-methyluridine(341) in tmRNA + S-adenosyl-L-homocysteine + H(+). Functionally, dual-specificity methyltransferase that catalyzes the formation of 5-methyluridine at position 54 (m5U54) in all tRNAs, and that of position 341 (m5U341) in tmRNA (transfer-mRNA). The chain is tRNA/tmRNA (uracil-C(5))-methyltransferase from Yersinia enterocolitica serotype O:8 / biotype 1B (strain NCTC 13174 / 8081).